A 271-amino-acid polypeptide reads, in one-letter code: Histone chaperone asf-1 (271 aa).

Positions 152–271 are disordered; it reads KWDSEASAPP…PKQQGMAMAQ (120 aa). Composition is skewed to acidic residues over residues 168-185 and 211-258; these read PEAD…DELA and IEED…EMEI.

Belongs to the ASF1 family. In terms of assembly, interacts with histone H3 and histone H4.

The protein resides in the nucleus. Its function is as follows. Histone chaperone that facilitates histone deposition and histone exchange and removal during nucleosome assembly and disassembly. In Neurospora crassa (strain ATCC 24698 / 74-OR23-1A / CBS 708.71 / DSM 1257 / FGSC 987), this protein is Histone chaperone asf-1 (asf-1).